A 443-amino-acid polypeptide reads, in one-letter code: Maintenance of mitochondrial morphology protein 1 (443 aa).

Topologically, residues 1–80 (MADLETSDLS…PSNTWSFTQG (80 aa)) are lumenal. The chain crosses the membrane as a helical span at residues 81-101 (LIVGQLSVVFVIVIFIKFFVF). The Cytoplasmic segment spans residues 102–443 (AESSPALAKS…NGDKVEDGSN (342 aa)). Disordered stretches follow at residues 126–146 (KKDQ…TTAS) and 304–358 (LSAH…NDGT). Over residues 131 to 142 (SSDDADPDDDSE) the composition is skewed to acidic residues. The 253-residue stretch at 165–417 (SPESLDWFNV…EPRFQVVRLP (253 aa)) folds into the SMP-LTD domain.

It belongs to the MMM1 family. In terms of assembly, homodimer. Component of the ER-mitochondria encounter structure (ERMES) or MDM complex, composed of MMM1, MDM10, MDM12 and MDM34. An MMM1 homodimer associates with one molecule of MDM12 on each side in a pairwise head-to-tail manner, and the SMP-LTD domains of MMM1 and MDM12 generate a continuous hydrophobic tunnel for phospholipid trafficking.

It is found in the endoplasmic reticulum membrane. Component of the ERMES/MDM complex, which serves as a molecular tether to connect the endoplasmic reticulum (ER) and mitochondria. Components of this complex are involved in the control of mitochondrial shape and protein biogenesis, and function in nonvesicular lipid trafficking between the ER and mitochondria. The MDM12-MMM1 subcomplex functions in the major beta-barrel assembly pathway that is responsible for biogenesis of all outer membrane beta-barrel proteins, and acts in a late step after the SAM complex. The MDM10-MDM12-MMM1 subcomplex further acts in the TOM40-specific pathway after the action of the MDM12-MMM1 complex. Essential for establishing and maintaining the structure of mitochondria and maintenance of mtDNA nucleoids. The polypeptide is Maintenance of mitochondrial morphology protein 1 (Scheffersomyces stipitis (strain ATCC 58785 / CBS 6054 / NBRC 10063 / NRRL Y-11545) (Yeast)).